Here is a 472-residue protein sequence, read N- to C-terminus: Putative diacyglycerol O-acyltransferase MT3172 (472 aa).

Catalysis depends on histidine 139, which acts as the Proton acceptor. A disordered region spans residues 217–238; the sequence is DRRVPPTFDRSAPPGPFQRGLS.

This sequence belongs to the long-chain O-acyltransferase family.

It catalyses the reaction an acyl-CoA + a 1,2-diacyl-sn-glycerol = a triacyl-sn-glycerol + CoA. It functions in the pathway glycerolipid metabolism; triacylglycerol biosynthesis. The polypeptide is Putative diacyglycerol O-acyltransferase MT3172 (Mycobacterium tuberculosis (strain CDC 1551 / Oshkosh)).